The sequence spans 702 residues: Putative endo-beta-N-acetylglucosaminidase (702 aa).

The first 23 residues, 1–23 (MKKVRFIFLALLFFLASPEGAMA), serve as a signal peptide directing secretion. Cell wall-binding repeat units lie at residues 42-63 (ANEW…DANY), 65-84 (ENEW…GGYM), 86-105 (KSEW…DGKM), 124-145 (IEDW…DGQH), 147-166 (EKEW…GGYL), 185-206 (QQGW…NGNY), 208-227 (DKEW…GGYM), 229-248 (ANEW…DGKI), 250-271 (EKEW…GGYM), 273-292 (ANEW…DGKM), 294-315 (EKEW…GGYM), 317-336 (ANEW…DGKI), 338-359 (EKEW…GGYM), 361-380 (ANEW…DGKM), and 382-403 (EKEW…GGYM).

This sequence belongs to the glycosyl hydrolase 73 family.

The protein localises to the secreted. The enzyme catalyses an N(4)-(oligosaccharide-(1-&gt;3)-[oligosaccharide-(1-&gt;6)]-beta-D-Man-(1-&gt;4)-beta-D-GlcNAc-(1-&gt;4)-alpha-D-GlcNAc)-L-asparaginyl-[protein] + H2O = an oligosaccharide-(1-&gt;3)-[oligosaccharide-(1-&gt;6)]-beta-D-Man-(1-&gt;4)-D-GlcNAc + N(4)-(N-acetyl-beta-D-glucosaminyl)-L-asparaginyl-[protein]. Functionally, plays an important role in cell wall degradation and cell separation. The protein is Putative endo-beta-N-acetylglucosaminidase (lytB) of Streptococcus pneumoniae (strain ATCC BAA-255 / R6).